The following is a 224-amino-acid chain: UPF0758 protein PSHAa2643 (224 aa).

Residues 102 to 224 (IFNSPNAVYD…CVSFAERGLI (123 aa)) enclose the MPN domain. The Zn(2+) site is built by His-173, His-175, and Asp-186. Positions 173–186 (HNHPSGIAEPSQAD) match the JAMM motif motif.

Belongs to the UPF0758 family.

In Pseudoalteromonas translucida (strain TAC 125), this protein is UPF0758 protein PSHAa2643.